Reading from the N-terminus, the 350-residue chain is MKCSLRVWFLSMAFLLVFIMSLLFTYSHHSMATLPYLDSGALGGTHRVKLVPGYSGLQRLGKEGLLGRNCACSRCMGDASTSEWFDSHFDGNISPVWTRDNMNLPPDVQRWWMMLQPQFKSHNTNEVLEKLFQIVPGENPYRFRDPQQCRRCAVVGNSGNLRGSGYGQEVDSHNFIMRMNQAPTVGFEKDVGSRTTHHFMYPESAKNLPANVSFVLVPFKALDLMWIASALSTGQIRFTYAPVKSFLRVDKEKVQIYNPAFFKYIHDRWTEHHGRYPSTGMLVLFFALHVCDEVNVYGFGADSRGNWHHYWENNRYAGEFRKTGVHDADFEAHIIDMLAKASKIEVYRGN.

Residues 1–6 (MKCSLR) lie on the Cytoplasmic side of the membrane. A helical; Signal-anchor for type II membrane protein transmembrane segment spans residues 7–27 (VWFLSMAFLLVFIMSLLFTYS). At 28 to 350 (HHSMATLPYL…ASKIEVYRGN (323 aa)) the chain is on the lumenal side. Intrachain disulfides connect Cys70–Cys75, Cys72–Cys149, and Cys152–Cys291. Positions 116, 157, and 180 each coordinate substrate. Residue Asn211 is glycosylated (N-linked (GlcNAc...) asparagine). Substrate is bound by residues Tyr240, Tyr276, Gly280, Gly300, His309, and His326.

Belongs to the glycosyltransferase 29 family. As to quaternary structure, homodimer; disulfide-linked. Homodimer formation occurs in the endoplasmic reticulum. Post-translationally, the soluble form derives from the membrane form by proteolytic processing. N-glycosylated; necessary for proper exit from endoplasmic reticulum and trafficking to the Golgi apparatus. Strongly expressed in brain and liver and to a lesser extent in heart and kidney. Scarcely detectable in lung, pancreas, spleen and submaxillary gland. Expressed in L5 dorsal root ganglion (DRG) neurons (at protein level).

Its subcellular location is the golgi apparatus. It is found in the golgi stack membrane. The protein resides in the secreted. It carries out the reaction a beta-D-galactosyl-(1-&gt;3)-N-acetyl-alpha-D-galactosaminyl derivative + CMP-N-acetyl-beta-neuraminate = an N-acetyl-alpha-neuraminyl-(2-&gt;3)-beta-D-galactosyl-(1-&gt;3)-N-acetyl-alpha-D-galactosaminyl derivative + CMP + H(+). The enzyme catalyses a ganglioside GM1 (d18:1(4E)) + CMP-N-acetyl-beta-neuraminate = a ganglioside GD1a (d18:1(4E)) + CMP + H(+). It catalyses the reaction ganglioside GM1 (d18:1(4E)/18:0) + CMP-N-acetyl-beta-neuraminate = ganglioside GD1a (18:1(4E)/18:0) + CMP + H(+). The catalysed reaction is a ganglioside GA1 + CMP-N-acetyl-beta-neuraminate = a ganglioside GM1b + CMP + H(+). It carries out the reaction a ganglioside GA1 (d18:1(4E)) + CMP-N-acetyl-beta-neuraminate = a ganglioside GM1b (d18:1(4E)) + CMP + H(+). The enzyme catalyses a ganglioside GD1b + CMP-N-acetyl-beta-neuraminate = a ganglioside GT1b + CMP + H(+). It catalyses the reaction a ganglioside GD1b (d18:1(4E)) + CMP-N-acetyl-beta-neuraminate = a ganglioside GT1b (d18:1(4E)) + CMP + H(+). The catalysed reaction is a globoside GalGb4Cer + CMP-N-acetyl-beta-neuraminate = a globoside MSGG + CMP + H(+). It functions in the pathway protein modification; protein glycosylation. It participates in glycolipid biosynthesis. Functionally, a beta-galactoside alpha2-3 sialyltransferase primarily involved in terminal sialylation of ganglio and globo series glycolipids. Catalyzes the transfer of sialic acid (N-acetyl-neuraminic acid; Neu5Ac) from the nucleotide sugar donor CMP-Neu5Ac onto acceptor Galbeta-(1-&gt;3)-GalNAc-terminated glycoconjugates through an alpha2-3 linkage. Sialylates GM1/GM1a, GA1/asialo-GM1 and GD1b gangliosides to form GD1a, GM1b and GT1b, respectively. Together with ST3GAL3, primarily responsible for biosynthesis of brain GD1a and GT1b that function as ligands for myelin-associated glycoprotein MAG on axons, regulating MAG expression and axonal myelin stability and regeneration. Via GT1b regulates TLR2 signaling in spinal cord microglia in response to nerve injury. Responsible for the sialylation of the pluripotent stem cell- and cancer stem cell-associated antigen SSEA3, forming SSEA4. Sialylates with low efficiency asialofetuin, presumably onto O-glycosidically linked Galbeta-(1-&gt;3)-GalNAc-O-Ser. This is CMP-N-acetylneuraminate-beta-galactosamide-alpha-2,3-sialyltransferase 2 from Mus musculus (Mouse).